A 349-amino-acid chain; its full sequence is AA9 family lytic polysaccharide monooxygenase C (349 aa).

Residues 1–19 (MKSTFGLLALAAAAKLVSA) form the signal peptide. 2 residues coordinate Cu(2+): His20 and His102. Cys62 and Cys183 form a disulfide bridge. His169 contacts O2. Tyr180 provides a ligand contact to Cu(2+). The interval 233–304 (DGSSSGSSGS…SGSNSGSDSC (72 aa)) is disordered. Low complexity-rich tracts occupy residues 234-262 (GSSSGSSGSSGSSPATTTAPAVSVTAAPT) and 269-304 (TSATPTTFVTATKPATTAAPAAPSASSGSNSGSDSC). Residues 311–347 (GSVKIYGQCGGQNYSGPTSCEAGLICKEWNPYYHQCV) form the CBM1 domain. 2 disulfides stabilise this stretch: Cys319–Cys336 and Cys330–Cys346. N-linked (GlcNAc...) asparagine glycosylation is present at Asn323.

Belongs to the polysaccharide monooxygenase AA9 family. Cu(2+) serves as cofactor.

The protein localises to the secreted. The catalysed reaction is [(1-&gt;4)-beta-D-glucosyl]n+m + reduced acceptor + O2 = 4-dehydro-beta-D-glucosyl-[(1-&gt;4)-beta-D-glucosyl]n-1 + [(1-&gt;4)-beta-D-glucosyl]m + acceptor + H2O.. Its function is as follows. Lytic polysaccharide monooxygenase (LPMO) that depolymerizes crystalline and amorphous polysaccharides via the oxidation of scissile alpha- or beta-(1-4)-glycosidic bonds, yielding C4 oxidation products. Catalysis by LPMOs requires the reduction of the active-site copper from Cu(II) to Cu(I) by a reducing agent and H(2)O(2) or O(2) as a cosubstrate. Active on cellulose and cello-oligosaccharides, as well as plant cell wall-derived hemicellulosic polysaccharides. Also active on cello-oligosaccharides such as cellohexaose, cellopentaose or cellotetraose. The chain is AA9 family lytic polysaccharide monooxygenase C from Aspergillus fumigatus (strain ATCC MYA-4609 / CBS 101355 / FGSC A1100 / Af293) (Neosartorya fumigata).